Reading from the N-terminus, the 199-residue chain is Recombination protein RecR (199 aa).

The C4-type zinc finger occupies 57 to 72 (CSICGNITDKDPCYVC). The Toprim domain occupies 80–176 (TIVCVVQDSR…RVTRIAHGLP (97 aa)).

Belongs to the RecR family.

May play a role in DNA repair. It seems to be involved in an RecBC-independent recombinational process of DNA repair. It may act with RecF and RecO. This chain is Recombination protein RecR, found in Exiguobacterium sibiricum (strain DSM 17290 / CCUG 55495 / CIP 109462 / JCM 13490 / 255-15).